Here is a 303-residue protein sequence, read N- to C-terminus: Ribosomal RNA small subunit methyltransferase H (303 aa).

S-adenosyl-L-methionine contacts are provided by residues 33 to 35 (GGH), Asp52, Phe79, Asp97, and Gln104.

It belongs to the methyltransferase superfamily. RsmH family.

It localises to the cytoplasm. The enzyme catalyses cytidine(1402) in 16S rRNA + S-adenosyl-L-methionine = N(4)-methylcytidine(1402) in 16S rRNA + S-adenosyl-L-homocysteine + H(+). Specifically methylates the N4 position of cytidine in position 1402 (C1402) of 16S rRNA. This is Ribosomal RNA small subunit methyltransferase H from Wolinella succinogenes (strain ATCC 29543 / DSM 1740 / CCUG 13145 / JCM 31913 / LMG 7466 / NCTC 11488 / FDC 602W) (Vibrio succinogenes).